A 355-amino-acid chain; its full sequence is Peptide chain release factor 1 (355 aa).

Gln-231 carries the post-translational modification N5-methylglutamine. Residues 283-292 show a composition bias toward basic and acidic residues; that stretch reads LAKETSERKS. The interval 283–306 is disordered; sequence LAKETSERKSQVGTGDRSGRIRTY.

It belongs to the prokaryotic/mitochondrial release factor family. Post-translationally, methylated by PrmC. Methylation increases the termination efficiency of RF1.

It is found in the cytoplasm. Peptide chain release factor 1 directs the termination of translation in response to the peptide chain termination codons UAG and UAA. In Campylobacter concisus (strain 13826), this protein is Peptide chain release factor 1.